Reading from the N-terminus, the 302-residue chain is Bifunctional protein FolD (302 aa).

NADP(+)-binding positions include 165–167, Ser-190, and Ile-231; that span reads GRS.

Belongs to the tetrahydrofolate dehydrogenase/cyclohydrolase family. Homodimer.

It carries out the reaction (6R)-5,10-methylene-5,6,7,8-tetrahydrofolate + NADP(+) = (6R)-5,10-methenyltetrahydrofolate + NADPH. The catalysed reaction is (6R)-5,10-methenyltetrahydrofolate + H2O = (6R)-10-formyltetrahydrofolate + H(+). It functions in the pathway one-carbon metabolism; tetrahydrofolate interconversion. Functionally, catalyzes the oxidation of 5,10-methylenetetrahydrofolate to 5,10-methenyltetrahydrofolate and then the hydrolysis of 5,10-methenyltetrahydrofolate to 10-formyltetrahydrofolate. This chain is Bifunctional protein FolD, found in Prochlorococcus marinus (strain MIT 9313).